The sequence spans 83 residues: Small ribosomal subunit protein uS17 (83 aa).

Belongs to the universal ribosomal protein uS17 family. Part of the 30S ribosomal subunit.

Its function is as follows. One of the primary rRNA binding proteins, it binds specifically to the 5'-end of 16S ribosomal RNA. In Nitratiruptor sp. (strain SB155-2), this protein is Small ribosomal subunit protein uS17.